Consider the following 69-residue polypeptide: Mu-conotoxin-like Am3.1 (69 aa).

A signal peptide spans 1–20 (MMSKLRVLLIICLLLFPLTA). Positions 21 to 52 (VPLDGDQPADRPAERTQDDISSEHHPMFDAVR) are excised as a propeptide. Residues 22 to 43 (PLDGDQPADRPAERTQDDISSE) form a disordered region. Basic and acidic residues predominate over residues 28 to 43 (PADRPAERTQDDISSE). 4-hydroxyproline; partial; in minor form is present on P66. The residue at position 68 (C68) is a Cysteine amide.

It belongs to the conotoxin M family. In terms of processing, mostly non-hydroxylated. Post-translationally, contains 3 disulfide bonds. As to expression, expressed by the venom duct.

Its subcellular location is the secreted. Its function is as follows. Mu-conotoxins block voltage-gated sodium channels (Nav). The chain is Mu-conotoxin-like Am3.1 from Conus amadis (Amadis cone).